A 302-amino-acid chain; its full sequence is Oxygen-dependent coproporphyrinogen-III oxidase (302 aa).

Ser94 contacts substrate. His98 and His108 together coordinate a divalent metal cation. Residue His108 is the Proton donor of the active site. 110–112 is a substrate binding site; sequence NVR. Residues His147 and His177 each coordinate a divalent metal cation. The interval 242–277 is important for dimerization; the sequence is YVEFNLVYDRGTLFGLQTGGRTESILMSMPPLVRWQ. 260-262 lines the substrate pocket; that stretch reads GGR.

This sequence belongs to the aerobic coproporphyrinogen-III oxidase family. As to quaternary structure, homodimer. A divalent metal cation is required as a cofactor.

The protein localises to the cytoplasm. The enzyme catalyses coproporphyrinogen III + O2 + 2 H(+) = protoporphyrinogen IX + 2 CO2 + 2 H2O. The protein operates within porphyrin-containing compound metabolism; protoporphyrin-IX biosynthesis; protoporphyrinogen-IX from coproporphyrinogen-III (O2 route): step 1/1. Involved in the heme biosynthesis. Catalyzes the aerobic oxidative decarboxylation of propionate groups of rings A and B of coproporphyrinogen-III to yield the vinyl groups in protoporphyrinogen-IX. This chain is Oxygen-dependent coproporphyrinogen-III oxidase, found in Shewanella sp. (strain MR-4).